The following is a 114-amino-acid chain: Phosphoribosyl-AMP cyclohydrolase (114 aa).

Position 76 (aspartate 76) interacts with Mg(2+). Residue cysteine 77 coordinates Zn(2+). Aspartate 78 and aspartate 80 together coordinate Mg(2+). Zn(2+) is bound by residues cysteine 93 and cysteine 100.

The protein belongs to the PRA-CH family. Homodimer. The cofactor is Mg(2+). Zn(2+) serves as cofactor.

It is found in the cytoplasm. The catalysed reaction is 1-(5-phospho-beta-D-ribosyl)-5'-AMP + H2O = 1-(5-phospho-beta-D-ribosyl)-5-[(5-phospho-beta-D-ribosylamino)methylideneamino]imidazole-4-carboxamide. It participates in amino-acid biosynthesis; L-histidine biosynthesis; L-histidine from 5-phospho-alpha-D-ribose 1-diphosphate: step 3/9. Its function is as follows. Catalyzes the hydrolysis of the adenine ring of phosphoribosyl-AMP. This chain is Phosphoribosyl-AMP cyclohydrolase, found in Streptococcus sanguinis (strain SK36).